Reading from the N-terminus, the 644-residue chain is Macrolide export ATP-binding/permease protein MacB (644 aa).

Topologically, residues 1–268 are cytoplasmic; it reads MNIIEIKQLN…SAIVAHKMRS (268 aa). The ABC transporter domain occupies 4 to 242; it reads IEIKQLNRYF…VKNPSVFKGR (239 aa). 40 to 47 provides a ligand contact to ATP; that stretch reads GQSGSGKS. A helical transmembrane segment spans residues 269–289; it reads LLTMLGIIIGITSVVSVVALG. The Periplasmic portion of the chain corresponds to 290 to 523; it reads NGSQQKILEN…TGTMKLLISS (234 aa). A helical transmembrane segment spans residues 524–544; that stretch reads IAFISLIVGGIGVMNIMLVSV. At 545–573 the chain is on the cytoplasmic side; the sequence is TERTKEIGVRMAIGARQINILQQFLIEAV. A helical membrane pass occupies residues 574-594; that stretch reads LICLIGGVAGILLSVLIGVLF. Topologically, residues 595-607 are periplasmic; that stretch reads NSFITDFSMDFST. A helical membrane pass occupies residues 608-628; the sequence is ASIVTAVLFSTLIGVLFGYMP. Over 629-644 the chain is Cytoplasmic; sequence AKKAAELNPITALAQE.

This sequence belongs to the ABC transporter superfamily. Macrolide exporter (TC 3.A.1.122) family. As to quaternary structure, homodimer. Part of the tripartite efflux system MacAB-TdeA, which is composed of an inner membrane transporter, MacB, a periplasmic membrane fusion protein, MacA, and an outer membrane component, TdeA. The complex forms a large protein conduit and can translocate molecules across both the inner and outer membranes. Interacts with MacA.

Its subcellular location is the cell inner membrane. Functionally, part of the tripartite efflux system MacAB-TdeA. MacB is a non-canonical ABC transporter that contains transmembrane domains (TMD), which form a pore in the inner membrane, and an ATP-binding domain (NBD), which is responsible for energy generation. Confers resistance against macrolides. The polypeptide is Macrolide export ATP-binding/permease protein MacB (Aggregatibacter actinomycetemcomitans (Actinobacillus actinomycetemcomitans)).